The primary structure comprises 249 residues: PF03932 family protein CutC (249 aa).

The protein belongs to the CutC family.

The protein localises to the cytoplasm. The sequence is that of PF03932 family protein CutC from Bacteroides thetaiotaomicron (strain ATCC 29148 / DSM 2079 / JCM 5827 / CCUG 10774 / NCTC 10582 / VPI-5482 / E50).